Here is a 342-residue protein sequence, read N- to C-terminus: Succinylglutamate desuccinylase (342 aa).

Residues His-63, Glu-66, and His-155 each coordinate Zn(2+). Glu-219 is an active-site residue.

It belongs to the AspA/AstE family. Succinylglutamate desuccinylase subfamily. Zn(2+) serves as cofactor.

The enzyme catalyses N-succinyl-L-glutamate + H2O = L-glutamate + succinate. Its pathway is amino-acid degradation; L-arginine degradation via AST pathway; L-glutamate and succinate from L-arginine: step 5/5. Functionally, transforms N(2)-succinylglutamate into succinate and glutamate. This is Succinylglutamate desuccinylase from Vibrio campbellii (strain ATCC BAA-1116).